Here is a 746-residue protein sequence, read N- to C-terminus: PAN2-PAN3 deadenylation complex subunit pan3 (746 aa).

Residues 7 to 35 (PKNQKQCKNIALHGYCRNSDKCEFSHELT) form a C3H1-type zinc finger. Low complexity predominate over residues 64-97 (QQQQQQQNSNGNGSNNTATSNNPIISPNSNIASP). Disordered regions lie at residues 64–100 (QQQQQQQNSNGNGSNNTATSNNPIISPNSNIASPLKK), 169–205 (DDQHLYPYGDNSVDDYEQHQYEPQPQPNNGIDPNMNN), and 219–275 (NASP…PSLQ). Over residues 196–205 (NNGIDPNMNN) the composition is skewed to polar residues. Residues 221 to 275 (SPQSYQQQFQQPNPSPQSSSQQQQQQQQQQQQAVYQQQQQQQPSSQPLAQNPSLQ) show a composition bias toward low complexity. The pseudokinase domain stretch occupies residues 351–610 (DPNDPRIKNI…NIDEVVLMIS (260 aa)). Residues Arg407, 457–464 (EFFPGSET), and 509–510 (SK) each bind ATP. The stretch at 611–649 (GRLLQENNYLHTYTDDLETELSKEYENGRLFRLVTKLGF) forms a coiled coil. Positions 650–746 (INERPLYDMD…SELVSQKSHI (97 aa)) are knob domain.

It belongs to the protein kinase superfamily. PAN3 family. As to quaternary structure, homodimer. Forms a heterotrimer with a catalytic subunit PAN2 to form the poly(A)-nuclease (PAN) deadenylation complex. Interacts (via PAM-2 motif) with poly(A)-binding protein (via PABC domain), conferring substrate specificity of the enzyme complex.

It localises to the cytoplasm. In terms of biological role, regulatory subunit of the poly(A)-nuclease (PAN) deadenylation complex, one of two cytoplasmic mRNA deadenylases involved in mRNA turnover. PAN specifically shortens poly(A) tails of RNA and the activity is stimulated by poly(A)-binding protein (PABP). PAN deadenylation is followed by rapid degradation of the shortened mRNA tails by the CCR4-NOT complex. Deadenylated mRNAs are then degraded by two alternative mechanisms, namely exosome-mediated 3'-5' exonucleolytic degradation, or deadenylation-dependent mRNA decaping and subsequent 5'-3' exonucleolytic degradation by XRN1. PAN3 acts as a positive regulator for PAN activity, recruiting the catalytic subunit PAN2 to mRNA via its interaction with RNA and PABP. The polypeptide is PAN2-PAN3 deadenylation complex subunit pan3 (Dictyostelium discoideum (Social amoeba)).